The primary structure comprises 184 residues: Acyl-homoserine-lactone synthase (184 aa).

Belongs to the autoinducer synthase family.

It catalyses the reaction a fatty acyl-[ACP] + S-adenosyl-L-methionine = an N-acyl-L-homoserine lactone + S-methyl-5'-thioadenosine + holo-[ACP] + H(+). Its function is as follows. Involved in the synthesis of the acyl-homoserine lactone (AHL) signal N-(3-hydroxydodecanoyl)-L-HSL (3-hydroxy-C(12)-HSL or OH-dDHL). Required for normal biofilm development. The sequence is that of Acyl-homoserine-lactone synthase from Acinetobacter baumannii.